The sequence spans 503 residues: Ell-associated factor Eaf (503 aa).

2 stretches are compositionally biased toward polar residues: residues 143-158 and 170-189; these read PGQQISNGSGPSTNVA and ENSTMRITSKTKVSTGSRRN. Disordered stretches follow at residues 143-223 and 251-503; these read PGQQ…PAWD and NGSQ…EDDD. Position 199 is a phosphoserine (S199). The segment covering 251 to 264 has biased composition (polar residues); sequence NGSQANTSGSSTGS. Positions 281–296 are enriched in basic residues; the sequence is GKQRQAPHHGHAKRQQ. Polar residues predominate over residues 297 to 311; sequence RSSPPMVQQQPNFGR. A compositionally biased stretch (low complexity) spans 312 to 326; the sequence is NSYNGGNNYAQQQQH. A compositionally biased stretch (acidic residues) spans 382 to 397; the sequence is DSSDSDSGSDSDDSTE. 2 stretches are compositionally biased toward low complexity: residues 415–435 and 484–497; these read MHHQQQQQQQHHLQQQQQQQH and NDLLQNDLQLSSNS.

This sequence belongs to the EAF family.

The protein resides in the nucleus. Functionally, promotes transcriptional elongation by Su(Tpl)/ELL. Essential for development. This Drosophila ananassae (Fruit fly) protein is Ell-associated factor Eaf.